The chain runs to 91 residues: Probable Fe(2+)-trafficking protein (91 aa).

The protein belongs to the Fe(2+)-trafficking protein family. As to quaternary structure, monomer.

In terms of biological role, could be a mediator in iron transactions between iron acquisition and iron-requiring processes, such as synthesis and/or repair of Fe-S clusters in biosynthetic enzymes. In Klebsiella pneumoniae subsp. pneumoniae (strain ATCC 700721 / MGH 78578), this protein is Probable Fe(2+)-trafficking protein.